A 1486-amino-acid polypeptide reads, in one-letter code: Chromosome partition protein MukB (1486 aa).

Position 34–41 (34–41 (GGNGAGKS)) interacts with ATP. 3 coiled-coil regions span residues 326–418 (LEAD…QYNQ), 444–480 (LETF…QAYQ), and 509–603 (RHLA…RAPV). The flexible hinge stretch occupies residues 666–783 (PGGSEDQRLN…EVPLFGRAAR (118 aa)). Coiled-coil stretches lie at residues 835 to 923 (EAEI…AKLE), 977 to 1115 (EMLS…TAKA), and 1209 to 1266 (VEAI…QNVS).

This sequence belongs to the SMC family. MukB subfamily. Homodimerization via its hinge domain. Binds to DNA via its C-terminal region. Interacts, and probably forms a ternary complex, with MukE and MukF via its C-terminal region. The complex formation is stimulated by calcium or magnesium. Interacts with tubulin-related protein FtsZ.

The protein localises to the cytoplasm. The protein resides in the nucleoid. Functionally, plays a central role in chromosome condensation, segregation and cell cycle progression. Functions as a homodimer, which is essential for chromosome partition. Involved in negative DNA supercoiling in vivo, and by this means organize and compact chromosomes. May achieve or facilitate chromosome segregation by condensation DNA from both sides of a centrally located replisome during cell division. This chain is Chromosome partition protein MukB, found in Shigella flexneri serotype 5b (strain 8401).